The chain runs to 336 residues: Aspartate--ammonia ligase (336 aa).

The protein belongs to the class-II aminoacyl-tRNA synthetase family. AsnA subfamily.

It is found in the cytoplasm. The enzyme catalyses L-aspartate + NH4(+) + ATP = L-asparagine + AMP + diphosphate + H(+). Its pathway is amino-acid biosynthesis; L-asparagine biosynthesis; L-asparagine from L-aspartate (ammonia route): step 1/1. The sequence is that of Aspartate--ammonia ligase from Limosilactobacillus reuteri (strain DSM 20016) (Lactobacillus reuteri).